A 373-amino-acid polypeptide reads, in one-letter code: Cytoplasmic tRNA 2-thiolation protein 1 (373 aa).

It belongs to the TtcA family. CTU1/NCS6/ATPBD3 subfamily.

The protein localises to the cytoplasm. It functions in the pathway tRNA modification; 5-methoxycarbonylmethyl-2-thiouridine-tRNA biosynthesis. Functionally, plays a central role in 2-thiolation of mcm(5)S(2)U at tRNA wobble positions of tRNA(Lys), tRNA(Glu) and tRNA(Gln). Directly binds tRNAs and probably acts by catalyzing adenylation of tRNAs, an intermediate required for 2-thiolation. It is unclear whether it acts as a sulfurtransferase that transfers sulfur from thiocarboxylated URM1 onto the uridine of tRNAs at wobble position. Prior mcm(5) tRNA modification by the elongator complex is required for 2-thiolation. May also be involved in protein urmylation. The polypeptide is Cytoplasmic tRNA 2-thiolation protein 1 (Malassezia globosa (strain ATCC MYA-4612 / CBS 7966) (Dandruff-associated fungus)).